Here is a 106-residue protein sequence, read N- to C-terminus: Large ribosomal subunit protein eL42 (106 aa).

The disordered stretch occupies residues 34–53 (YAQGRRRYDRKRSGYGGQTK). Lys53 carries the N6-methyllysine modification.

It belongs to the eukaryotic ribosomal protein eL42 family.

It localises to the cytoplasm. This Pongo abelii (Sumatran orangutan) protein is Large ribosomal subunit protein eL42 (RPL36AL).